The chain runs to 489 residues: MTFRNCVAVDLGASSGRVMLARYERECRSLTLREIHRFNNGLHSQNGYVTWNVDSLESAIRLGLNKVCEEGIRIDSIGIDTWGVDFVLLDQHGQRVGLPVAYRDSRTNGLMAQAQQQLGKRDIYQRSGIQFLPFNTIYQLRALTEQQPELIPHIAHALLIPDYFSYRLTGKMNWEYTNATTTQLVNINSDDWDESLLAWSGANKAWFGRPTHPGNVIGHWICPQGNEIPVVAVASHDTASAVIASPLNGSRAAYLSSGTWSLMGFESQTPFTNDTALAANITNEGGAEGRYRVLKNIMGLWLLQRVLQERQINDLPALIAATQALPACRFIINPNDDRFINPDEMCSEIQAACRETAQPIPENDAELARCIFDSLALLYADVLHELAQLRGEDFSQLHIVGGGCQNTLLNQLCADACGIRVIAGPVEASTLGNIGIQLMTLDELNNVDDFRQVVSTTANLTTFTPNPDSEIAHYVAQIHSTRQTKELCA.

13–17 contacts ATP; that stretch reads ASSGR. The cysteines at positions 68 and 222 are disulfide-linked. Substrate contacts are provided by residues Gly83 and 236 to 238; that span reads HDT. Residue Asp237 is the Proton acceptor of the active site. Thr259 lines the ATP pocket. A substrate-binding site is contributed by Asn296. Gln304 lines the ATP pocket. A disulfide bridge links Cys353 with Cys370. Gly402 is an ATP binding site. A disulfide bond links Cys413 and Cys417.

Belongs to the rhamnulokinase family. In terms of assembly, monomer. Requires Mg(2+) as cofactor.

The catalysed reaction is L-rhamnulose + ATP = L-rhamnulose 1-phosphate + ADP + H(+). It functions in the pathway carbohydrate degradation; L-rhamnose degradation; glycerone phosphate from L-rhamnose: step 2/3. Its function is as follows. Involved in the catabolism of L-rhamnose (6-deoxy-L-mannose). Catalyzes the transfer of the gamma-phosphate group from ATP to the 1-hydroxyl group of L-rhamnulose to yield L-rhamnulose 1-phosphate. The chain is Rhamnulokinase from Escherichia coli O127:H6 (strain E2348/69 / EPEC).